Consider the following 130-residue polypeptide: Small ribosomal subunit protein uS9 (130 aa).

This sequence belongs to the universal ribosomal protein uS9 family.

This is Small ribosomal subunit protein uS9 from Photorhabdus laumondii subsp. laumondii (strain DSM 15139 / CIP 105565 / TT01) (Photorhabdus luminescens subsp. laumondii).